The primary structure comprises 93 residues: Defensin-like protein 209 (93 aa).

The signal sequence occupies residues 1-19 (MKITILFLTLLVLSSSCTS). Disulfide bonds link cysteine 63-cysteine 80, cysteine 66-cysteine 85, and cysteine 70-cysteine 87.

This sequence belongs to the DEFL family.

It localises to the secreted. The polypeptide is Defensin-like protein 209 (Arabidopsis thaliana (Mouse-ear cress)).